The primary structure comprises 171 residues: 3-hydroxydecanoyl-[acyl-carrier-protein] dehydratase (171 aa).

The active site involves His70.

The protein belongs to the thioester dehydratase family. FabA subfamily. In terms of assembly, homodimer.

Its subcellular location is the cytoplasm. It carries out the reaction a (3R)-hydroxyacyl-[ACP] = a (2E)-enoyl-[ACP] + H2O. The enzyme catalyses (3R)-hydroxydecanoyl-[ACP] = (2E)-decenoyl-[ACP] + H2O. The catalysed reaction is (2E)-decenoyl-[ACP] = (3Z)-decenoyl-[ACP]. It functions in the pathway lipid metabolism; fatty acid biosynthesis. In terms of biological role, necessary for the introduction of cis unsaturation into fatty acids. Catalyzes the dehydration of (3R)-3-hydroxydecanoyl-ACP to E-(2)-decenoyl-ACP and then its isomerization to Z-(3)-decenoyl-ACP. Can catalyze the dehydratase reaction for beta-hydroxyacyl-ACPs with saturated chain lengths up to 16:0, being most active on intermediate chain length. This is 3-hydroxydecanoyl-[acyl-carrier-protein] dehydratase from Stutzerimonas stutzeri (strain A1501) (Pseudomonas stutzeri).